The chain runs to 1804 residues: Collagen alpha-1(XI) chain (1804 aa).

Residues 1–34 form the signal peptide; that stretch reads MEPWSRWKTKRWIWDLTISTLVLTFLFQAREVRG. The propeptide at 35–511 is N-terminal propeptide; sequence AAPVDILKAL…SKGPTISAQE (477 aa). Cystine bridges form between Cys-60–Cys-242 and Cys-181–Cys-235. The region spanning 70-242 is the Laminin G-like domain; that stretch reads DIAYRVTEEA…DYCDHYSPDC (173 aa). Positions 229 to 417 are nonhelical region; that stretch reads KAAYDYCDHY…DFTETSINGH (189 aa). The N-linked (GlcNAc...) asparagine glycan is linked to Asn-351. Residues 418–506 form a triple-helical region (interrupted) region; sequence GAYGEKGQKG…YGGDGSKGPT (89 aa). The segment at 437–506 is disordered; the sequence is LVEGPPGPAG…YGGDGSKGPT (70 aa). The region spanning 440 to 488 is the Collagen-like 1 domain; it reads GPPGPAGPAGLMGPPGLQGPSGLPGDPGDRGPPGRPGLPGADGLPGPPG. Composition is skewed to low complexity over residues 447–465 and 477–494; these read PAGLMGPPGLQGPSGLPGD and LPGADGLPGPPGTMLMLP. The tract at residues 507–509 is short nonhelical segment; sequence ISA. Residues 510 to 527 form a telopeptide region; sequence QEAQAQAILQQARIALRG. The disordered stretch occupies residues 526-1560; it reads RGPPGPMGLT…KTRRHTESIQ (1035 aa). Residues 528 to 1540 form a triple-helical region region; the sequence is PPGPMGLTGR…PGPPGPPGEV (1013 aa). Collagen-like domains are found at residues 530 to 584, 581 to 639, 607 to 664, and 641 to 698; these read GPMG…GADG, GADG…EIGP, PGDK…PGQP, and GLPG…GPQG. Composition is skewed to gly residues over residues 539-548 and 581-590; these read GPVGGPGSAG and GADGGRGMPG. The residue at position 610 (Lys-610) is an Allysine. Positions 639 to 655 are enriched in low complexity; it reads PRGLPGEAGPRGLLGPR. The segment covering 697-708 has biased composition (pro residues); the sequence is QGLPGPQGPIGP. Positions 715 to 726 are enriched in low complexity; that stretch reads QGKPGLAGLPGA. Residues 746–804 form the Collagen-like 6 domain; sequence GPPGPQGPIGYPGPRGVKGADGVRGLKGSKGEKGEDGFPGFKGDMGLKGDRGEVGQVGP. Residues 805 to 814 show a composition bias toward basic and acidic residues; the sequence is RGEDGPEGPK. 3 stretches are compositionally biased toward low complexity: residues 873–901, 916–925, and 969–979; these read KPGPRGQRGPTGPRGSRGARGPTGKPGPK, RGPQGPQGPV, and PQGPTGETGPI. The span at 1040–1049 shows a compositional bias: gly residues; sequence GLKGGEGPQG. A compositionally biased stretch (pro residues) spans 1074–1083; it reads RPGPQGPPGP. Positions 1084 to 1108 are enriched in low complexity; that stretch reads AGEKGAPGEKGPQGPAGRDGVQGPV. Residues 1160 to 1169 are compositionally biased toward gly residues; the sequence is GIAGGDGEAG. Pro residues-rich tracts occupy residues 1216 to 1227 and 1341 to 1360; these read MGPPGPPGPRGP and QPGPPGPSGEAGPPGPPGKR. Low complexity-rich tracts occupy residues 1383 to 1392 and 1417 to 1426; these read AEGPPGKTGP and QGLPGAAGQD. Collagen-like domains are found at residues 1391–1449, 1442–1492, and 1481–1539; these read GPVG…SKGE, GDPG…PGPA, and GAKG…PPGE. The span at 1428–1437 shows a compositional bias: pro residues; the sequence is PPGPLGPPGL. Allysine is present on Lys-1450. A compositionally biased stretch (low complexity) spans 1453-1462; it reads PGLIGLIGPP. Gly residues predominate over residues 1481-1490; sequence GAKGDGGIPG. Residues 1491-1507 are compositionally biased toward pro residues; sequence PAGPIGPPGPPGLPGPA. Low complexity predominate over residues 1509–1519; that stretch reads PKGNKGSSGPT. A compositionally biased stretch (pro residues) spans 1528–1537; that stretch reads PGPPGPPGPP. Residues 1541–1561 are nonhelical region (C-terminal); the sequence is IQPLPILSPKKTRRHTESIQA. Residues 1562–1804 constitute a propeptide, C-terminal propeptide; the sequence is DAGDNILDYS…FEVGPACFLG (243 aa). The Fibrillar collagen NC1 domain maps to 1575 to 1803; it reads EEIFGSLNSL…GFEVGPACFL (229 aa). Cys-1605 and Cys-1637 are disulfide-bonded. Ca(2+) contacts are provided by Asp-1623, Asn-1625, Gln-1626, Cys-1628, and Asp-1631. N-linked (GlcNAc...) asparagine glycans are attached at residues Asn-1638 and Asn-1707. Cystine bridges form between Cys-1646–Cys-1801 and Cys-1712–Cys-1755.

Belongs to the fibrillar collagen family. Trimers composed of three different chains: alpha 1(XI), alpha 2(XI), and alpha 3(XI). Alpha 3(XI) is probably a post-translational modification of alpha 1(II). Post-translationally, prolines at the third position of the tripeptide repeating unit (G-X-Y) are hydroxylated in some or all of the chains. N-glycosylated.

It localises to the secreted. It is found in the extracellular space. The protein localises to the extracellular matrix. Its function is as follows. May play an important role in fibrillogenesis by controlling lateral growth of collagen II fibrils. This is Collagen alpha-1(XI) chain (Col11a1) from Rattus norvegicus (Rat).